The chain runs to 106 residues: Large ribosomal subunit protein bL21 (106 aa).

The protein belongs to the bacterial ribosomal protein bL21 family. Part of the 50S ribosomal subunit. Contacts protein L20.

This protein binds to 23S rRNA in the presence of protein L20. The sequence is that of Large ribosomal subunit protein bL21 from Chlamydia pneumoniae (Chlamydophila pneumoniae).